Reading from the N-terminus, the 343-residue chain is Fe-S cluster assembly protein DRE2 (343 aa).

The segment at 1–188 is N-terminal SAM-like domain; the sequence is MTVSRDSLVL…KKLTKKVSAI (188 aa). The tract at residues 189-240 is linker; that stretch reads KLTDSDLEDDDDDLESDDSANNSKTKFFDDFDDPETGDSIDEDDLIAETEED. Composition is skewed to acidic residues over residues 195-206 and 218-228; these read LEDDDDDLESDD and DFDDPETGDSI. The segment at 195 to 228 is disordered; it reads LEDDDDDLESDDSANNSKTKFFDDFDDPETGDSI. 4 residues coordinate [2Fe-2S] cluster: Cys247, Cys258, Cys261, and Cys263. The interval 247 to 263 is fe-S binding site A; it reads CGKSKQRRRKACKDCSC. [4Fe-4S] cluster is bound by residues Cys306, Cys309, Cys317, and Cys320. 2 consecutive short sequence motifs (cx2C motif) follow at residues 306–309 and 317–320; these read CGSC and CSGC. Residues 306–320 are fe-S binding site B; that stretch reads CGSCALGDAFRCSGC.

This sequence belongs to the anamorsin family. Monomer. Interacts with TAH18. Interacts with MIA40. The cofactor is [2Fe-2S] cluster. [4Fe-4S] cluster is required as a cofactor.

It localises to the cytoplasm. The protein localises to the mitochondrion intermembrane space. Its function is as follows. Component of the cytosolic iron-sulfur (Fe-S) protein assembly (CIA) machinery required for the maturation of extramitochondrial Fe-S proteins. Part of an electron transfer chain functioning in an early step of cytosolic Fe-S biogenesis, facilitating the de novo assembly of a [4Fe-4S] cluster on the scaffold complex CFD1-NBP35. Electrons are transferred to DRE2 from NADPH via the FAD- and FMN-containing protein TAH18. TAH18-DRE2 are also required for the assembly of the diferric tyrosyl radical cofactor of ribonucleotide reductase (RNR), probably by providing electrons for reduction during radical cofactor maturation in the catalytic small subunit RNR2. The chain is Fe-S cluster assembly protein DRE2 from Kluyveromyces lactis (strain ATCC 8585 / CBS 2359 / DSM 70799 / NBRC 1267 / NRRL Y-1140 / WM37) (Yeast).